A 360-amino-acid polypeptide reads, in one-letter code: Histidinol-phosphate aminotransferase (360 aa).

The residue at position 218 (K218) is an N6-(pyridoxal phosphate)lysine.

This sequence belongs to the class-II pyridoxal-phosphate-dependent aminotransferase family. Histidinol-phosphate aminotransferase subfamily. Homodimer. Requires pyridoxal 5'-phosphate as cofactor.

It catalyses the reaction L-histidinol phosphate + 2-oxoglutarate = 3-(imidazol-4-yl)-2-oxopropyl phosphate + L-glutamate. It functions in the pathway amino-acid biosynthesis; L-histidine biosynthesis; L-histidine from 5-phospho-alpha-D-ribose 1-diphosphate: step 7/9. The protein is Histidinol-phosphate aminotransferase of Pelagibacter ubique (strain HTCC1062).